A 2320-amino-acid chain; its full sequence is Bromodomain and WD repeat-containing protein 1 (2320 aa).

WD repeat units lie at residues 184-223 (GHLSAVYCVAFDRTGHRIFTGSDDCLVKIWSTHNGRLLST), 226-265 (GHSAEISDMAVNYENTMIAAGSCDKIIRVWCLRTCAPVAV), 268-311 (GHTG…LKFS), 322-365 (RPGV…AELE), 366-405 (SHTDKVDSIQFCNNGDRFLSGSRDGTARIWRFEQLEWRSI), 424-463 (FMKPKVTMIAWNQNDSIVVTAVNDHVLKVWNSYTGQLLHN), 466-506 (GHAD…KMKH), and 514-553 (QGHGAVFDCKFSQDGQHFACTDSHGHLLIFGFGCSKPYEK). Residues 668–691 (QRMGADQDTIPRGLSNGEETPRRG) are disordered. A Phosphothreonine modification is found at Thr687. Residues Ser696, Ser701, and Ser710 each carry the phosphoserine modification. Disordered regions lie at residues 809–867 (NRSW…RYSD) and 895–925 (SEDEISTENLSPPKRRRKRKKENKPKKENLR). 2 stretches are compositionally biased toward low complexity: residues 814–824 (ELSSGNESSSS) and 854–867 (YSESSSDSSSRYSD). Over residues 907-918 (PKRRRKRKKENK) the composition is skewed to basic residues. The 108-residue stretch at 1157–1264 (WGQKSRDEEC…DQLLKFIKNQ (108 aa)) folds into the Bromo 1 domain. Positions 1271-1304 (ELSNTSENDEQNAEDLDDSDLPKTSSGRRRVHDG) are disordered. A compositionally biased stretch (acidic residues) spans 1277-1289 (ENDEQNAEDLDDS). Phosphoserine is present on Ser1289. The 106-residue stretch at 1313-1418 (YVESNWKKQC…ALFEEKMKKI (106 aa)) folds into the Bromo 2 domain. A disordered region spans residues 1434–1593 (RSQRFKQRQN…TGPVSLANGC (160 aa)). Over residues 1443-1454 (NCKGDSQPNKSI) the composition is skewed to polar residues. A compositionally biased stretch (basic residues) spans 1455-1464 (RNLKPKRLKS). Ser1475 is subject to Phosphoserine. The segment covering 1475–1496 (SPTQSTSSRTAYLGTHKTSAGI) has biased composition (polar residues). Thr1477 bears the Phosphothreonine mark. Ser1479 is modified (phosphoserine). Low complexity predominate over residues 1497 to 1509 (SSGVTSGDSSDSA). The segment covering 1520–1529 (PITNGSTLSE) has biased composition (polar residues). Residues 1535-1548 (SLATSLSSSASSSS) are compositionally biased toward low complexity. Over residues 1549-1561 (EESKESSRARESS) the composition is skewed to basic and acidic residues. Residues Ser1605, Ser1607, Ser1678, Ser1683, and Ser1686 each carry the phosphoserine modification. Disordered regions lie at residues 1670–1805 (ARKK…KYNT), 1817–1839 (KILSDSEDSESEEQDREDGKCHK), and 1862–1899 (DHGCETDLDSDDDKIEKPNNFMKDSASQDNGLSRKISR). Basic and acidic residues predominate over residues 1676–1687 (HNSEDEQSLKSE). Polar residues predominate over residues 1701 to 1712 (PVSSSHTAQSNV). 2 stretches are compositionally biased toward basic and acidic residues: residues 1715-1728 (SENRDSESESDLRV) and 1751-1769 (LKIESSEEDSKSHDSDHAC). 6 positions are modified to phosphoserine: Ser1755, Ser1756, Ser1786, Ser1788, Ser1793, and Ser1820. Acidic residues predominate over residues 1821-1832 (DSEDSESEEQDR). Phosphothreonine is present on Thr1867. Ser1871, Ser1904, Ser1905, Ser1907, Ser1910, and Ser1943 each carry phosphoserine. Residue Thr1955 is modified to Phosphothreonine. Disordered stretches follow at residues 2014-2077 (LNGD…TLAQ) and 2112-2184 (TKVI…TKGK). 3 positions are modified to phosphoserine: Ser2018, Ser2020, and Ser2052. 2 stretches are compositionally biased toward basic and acidic residues: residues 2054–2069 (EDSKSHIPGSETDRTF) and 2114–2139 (VIHDSQETAEKEVKRKRSHPELENVK). Polar residues predominate over residues 2140–2165 (ISETTGNSKFRPDTSSKSSDLGSVTE). The residue at position 2164 (Thr2164) is a Phosphothreonine. Phosphoserine occurs at positions 2166 and 2214.

In terms of assembly, interacts with SMARCA4. As to expression, ubiquitously expressed. Expressed in respiratory epithelial cells and testis spermatozoa.

It is found in the cytoplasm. Its subcellular location is the nucleus. It localises to the cell projection. The protein localises to the cilium membrane. The protein resides in the cytoskeleton. It is found in the flagellum axoneme. Its function is as follows. May be a transcriptional activator. May be involved in chromatin remodeling. Plays a role in the regulation of cell morphology and cytoskeletal organization. Required in the control of cell shape. In Homo sapiens (Human), this protein is Bromodomain and WD repeat-containing protein 1 (BRWD1).